Here is a 529-residue protein sequence, read N- to C-terminus: Bifunctional purine biosynthesis protein PurH (529 aa).

Positions 2–149 constitute an MGS-like domain; the sequence is TDLHPVRRAL…KNHAFVNVVV (148 aa).

The protein belongs to the PurH family.

It catalyses the reaction (6R)-10-formyltetrahydrofolate + 5-amino-1-(5-phospho-beta-D-ribosyl)imidazole-4-carboxamide = 5-formamido-1-(5-phospho-D-ribosyl)imidazole-4-carboxamide + (6S)-5,6,7,8-tetrahydrofolate. It carries out the reaction IMP + H2O = 5-formamido-1-(5-phospho-D-ribosyl)imidazole-4-carboxamide. It participates in purine metabolism; IMP biosynthesis via de novo pathway; 5-formamido-1-(5-phospho-D-ribosyl)imidazole-4-carboxamide from 5-amino-1-(5-phospho-D-ribosyl)imidazole-4-carboxamide (10-formyl THF route): step 1/1. The protein operates within purine metabolism; IMP biosynthesis via de novo pathway; IMP from 5-formamido-1-(5-phospho-D-ribosyl)imidazole-4-carboxamide: step 1/1. The sequence is that of Bifunctional purine biosynthesis protein PurH from Ruegeria sp. (strain TM1040) (Silicibacter sp.).